A 361-amino-acid chain; its full sequence is Molybdenum import ATP-binding protein ModC (361 aa).

The region spanning 1–228 (MLNINIEKQL…EQMRPWVPLQ (228 aa)) is the ABC transporter domain. Residue 31-38 (GRSGAGKT) participates in ATP binding. Residues 289–356 (GSSVRNLLRG…IKGVTMTQMD (68 aa)) enclose the Mop domain.

The protein belongs to the ABC transporter superfamily. Molybdate importer (TC 3.A.1.8) family. In terms of assembly, the complex is composed of two ATP-binding proteins (ModC), two transmembrane proteins (ModB) and a solute-binding protein (ModA).

It is found in the cell inner membrane. The enzyme catalyses molybdate(out) + ATP + H2O = molybdate(in) + ADP + phosphate + H(+). Functionally, part of the ABC transporter complex ModABC involved in molybdenum import. Responsible for energy coupling to the transport system. The chain is Molybdenum import ATP-binding protein ModC from Shewanella sp. (strain MR-7).